Here is a 185-residue protein sequence, read N- to C-terminus: Ribosome-recycling factor (185 aa).

It belongs to the RRF family.

The protein localises to the cytoplasm. Functionally, responsible for the release of ribosomes from messenger RNA at the termination of protein biosynthesis. May increase the efficiency of translation by recycling ribosomes from one round of translation to another. The chain is Ribosome-recycling factor from Campylobacter jejuni subsp. doylei (strain ATCC BAA-1458 / RM4099 / 269.97).